The sequence spans 113 residues: Large ribosomal subunit protein uL22 (113 aa).

The protein belongs to the universal ribosomal protein uL22 family. As to quaternary structure, part of the 50S ribosomal subunit.

In terms of biological role, this protein binds specifically to 23S rRNA; its binding is stimulated by other ribosomal proteins, e.g. L4, L17, and L20. It is important during the early stages of 50S assembly. It makes multiple contacts with different domains of the 23S rRNA in the assembled 50S subunit and ribosome. Its function is as follows. The globular domain of the protein is located near the polypeptide exit tunnel on the outside of the subunit, while an extended beta-hairpin is found that lines the wall of the exit tunnel in the center of the 70S ribosome. The polypeptide is Large ribosomal subunit protein uL22 (Bacillus cereus (strain ATCC 10987 / NRS 248)).